Consider the following 343-residue polypeptide: Transcription factor BPE (343 aa).

One can recognise a bHLH domain in the interval 142–192 (QATDSHSLAERARREKISERMKILQDLVPGCNKVIGKALVLDEIINYIQSL).

In terms of assembly, homodimer. In terms of tissue distribution, specifically expressed in flowers, mostly in petals, inflorescence and flower buds. Expressed ubiquitously (leaves, flowers and stems).

Its subcellular location is the nucleus. Its function is as follows. Involved in the control of petal size, by interfering with postmitotic cell expansion to limit final petal cell size. The protein is Transcription factor BPE (BPE) of Arabidopsis thaliana (Mouse-ear cress).